Consider the following 74-residue polypeptide: Large ribosomal subunit protein bL31 (74 aa).

Zn(2+) contacts are provided by Cys16, Cys18, Cys37, and Cys40.

This sequence belongs to the bacterial ribosomal protein bL31 family. Type A subfamily. In terms of assembly, part of the 50S ribosomal subunit. The cofactor is Zn(2+).

In terms of biological role, binds the 23S rRNA. In Koribacter versatilis (strain Ellin345), this protein is Large ribosomal subunit protein bL31.